A 432-amino-acid chain; its full sequence is Glycerophosphocholine acyltransferase 1 (432 aa).

The Cytoplasmic portion of the chain corresponds to 1 to 110; that stretch reads MYKLDNNDID…DSIFFKNSSR (110 aa). The residue at position 78 (Ser-78) is a Phosphoserine. Residues 111–131 traverse the membrane as a helical segment; the sequence is LEKAFYPFTLFNIFFIGFLMG. Position 132 (Arg-132) is a topological domain, lumenal. Residues 133–153 traverse the membrane as a helical segment; it reads FPEWFHVYYTILFFVLMPIRF. Topologically, residues 154–162 are cytoplasmic; that stretch reads YTYYKTKNH. A helical transmembrane segment spans residues 163 to 183; the sequence is YFLADFCYFVNMLCLLFIWIF. Residues 184 to 187 are Lumenal-facing; the sequence is PYSY. Residues 188–208 traverse the membrane as a helical segment; that stretch reads SLFQSCFAFTFGTLCFAVITW. The Cytoplasmic portion of the chain corresponds to 209 to 221; that stretch reads RNSLVIHSIDKTT. A helical transmembrane segment spans residues 222–242; the sequence is SCFIHIIPPCVMYVIYHGLPL. The Lumenal portion of the chain corresponds to 243–263; sequence EYKIERFPGAIIQSELDIKKN. A helical membrane pass occupies residues 264-284; sequence ILWTSLYYLVWQSLYHYFITL. The Cytoplasmic segment spans residues 285–318; it reads KKSSKIKSGERMTSFEYLTTHQFKNFWAVKLRSP. A helical transmembrane segment spans residues 319-339; sequence WPMIIYTLSQYFYQLFTMLLC. Residues 340–346 lie on the Lumenal side of the membrane; sequence GIWIRYK. A helical transmembrane segment spans residues 347 to 369; it reads LAAALFLTIVFLWASHNGATYYI. The Cytoplasmic segment spans residues 370–432; it reads DHYGKNFEKE…DSSSVSSKSD (63 aa). Residues 413-432 form a disordered region; it reads LNVNRDEDFDDSSSVSSKSD.

It belongs to the GPC1 family.

The protein localises to the membrane. The catalysed reaction is sn-glycerol 3-phosphocholine + an acyl-CoA = a 1-acyl-sn-glycero-3-phosphocholine + CoA. The enzyme catalyses sn-glycero-3-phosphoethanolamine + an acyl-CoA = a monoacyl-sn-glycero-3-phosphoethanolamine + CoA. It catalyses the reaction sn-glycero-3-phosphoethanolamine + (9Z)-octadecenoyl-CoA = (9Z-octadecenoyl)-sn-glycero-3-phosphoethanolamine + CoA. It carries out the reaction sn-glycerol 3-phosphocholine + hexadecanoyl-CoA = hexadecanoyl-sn-glycero-3-phosphocholine + CoA. The catalysed reaction is (9Z,12Z)-octadecadienoyl-CoA + sn-glycerol 3-phosphocholine = (9Z,12Z-octadecadienoyl)-sn-glycero-3-phosphocholine + CoA. The enzyme catalyses (12R)-hydroxy-(9Z)-octadecenoyl-CoA + sn-glycerol 3-phosphocholine = (12R-hydroxy-9Z-octadecenoyl)-sn-glycero-3-phosphocholine + CoA. It catalyses the reaction (9Z,12Z,15Z)-octadecatrienoyl-CoA + sn-glycerol 3-phosphocholine = (9Z,12Z,15Z-octadecatrienoyl)-sn-glycero-3-phosphocholine + CoA. It carries out the reaction sn-glycerol 3-phosphocholine + (9Z)-octadecenoyl-CoA = (9Z-octadecenoyl)-sn-glycero-3-phosphocholine + CoA. The catalysed reaction is 1-(9Z-octadecenoyl)-sn-glycero-3-phosphoethanolamine + sn-glycerol 3-phosphocholine = (9Z-octadecenoyl)-sn-glycero-3-phosphocholine + sn-glycero-3-phosphoethanolamine. With respect to regulation, the GPCAT activity is sensitive to N-ethylmaleimide, phenanthroline, and divalent cations including Ca(2+), Mg(2+), Mn(2+) and Zn(2+). The activity is also inhibited by glycerol-3-phosphate (G3P). In terms of biological role, glycerophosphocholine acyltransferase (GPCAT) that utilizes acyl-CoA to acylate glycero-3-phosphocholine (GPC), forming lysophosphatidylcholine (LPC). Shows broad acyl specificities with a preference for 16:0-CoA, polyunsaturated acyl-CoA, and the hydroxylated ricinoleoyl-CoA. Also catalyzes the acylation of glycero-3-phosphoethanolamine (GPE) with acyl-CoA. In addition to acyl-CoA, GPCAT efficiently utilizes LPC and lysophosphatidylethanolamine (LPE) as acyl donors in the acylation of GPC. Contributes to the maintenance of phosphatidylcholine (PC) homeostasis and might also have specific functions in acyl editing of PC, such as transferring acyl groups modified at the sn-2 position of PC to the sn-1. Involved in postsynthetic PC remodeling that produces more saturated PC species. The chain is Glycerophosphocholine acyltransferase 1 from Saccharomyces cerevisiae (strain ATCC 204508 / S288c) (Baker's yeast).